The primary structure comprises 447 residues: Kynureninase (447 aa).

Pyridoxal 5'-phosphate contacts are provided by residues Leu-106, Thr-107, 134–137 (FPSD), Asp-220, His-223, and Tyr-245. N6-(pyridoxal phosphate)lysine is present on Lys-246. Pyridoxal 5'-phosphate is bound by residues Trp-275 and Asn-303.

This sequence belongs to the kynureninase family. Homodimer. Requires pyridoxal 5'-phosphate as cofactor.

The protein localises to the cytoplasm. It carries out the reaction L-kynurenine + H2O = anthranilate + L-alanine + H(+). The catalysed reaction is 3-hydroxy-L-kynurenine + H2O = 3-hydroxyanthranilate + L-alanine + H(+). It participates in amino-acid degradation; L-kynurenine degradation; L-alanine and anthranilate from L-kynurenine: step 1/1. The protein operates within cofactor biosynthesis; NAD(+) biosynthesis; quinolinate from L-kynurenine: step 2/3. In terms of biological role, catalyzes the cleavage of L-kynurenine (L-Kyn) and L-3-hydroxykynurenine (L-3OHKyn) into anthranilic acid (AA) and 3-hydroxyanthranilic acid (3-OHAA), respectively. The sequence is that of Kynureninase from Eremothecium gossypii (strain ATCC 10895 / CBS 109.51 / FGSC 9923 / NRRL Y-1056) (Yeast).